A 184-amino-acid chain; its full sequence is Ribosome-recycling factor (184 aa).

This sequence belongs to the RRF family.

The protein resides in the cytoplasm. Functionally, responsible for the release of ribosomes from messenger RNA at the termination of protein biosynthesis. May increase the efficiency of translation by recycling ribosomes from one round of translation to another. The chain is Ribosome-recycling factor from Psychrobacter arcticus (strain DSM 17307 / VKM B-2377 / 273-4).